A 160-amino-acid polypeptide reads, in one-letter code: Cytochrome b6-f complex subunit 4 (160 aa).

Transmembrane regions (helical) follow at residues 36 to 56 (LLYIFPVVILGTIACNVGLAV), 95 to 115 (LLGVLLMVSVPTGLLTVPFLE), and 131 to 151 (TVFLIGTAVALWLGIGATLPI).

This sequence belongs to the cytochrome b family. PetD subfamily. The 4 large subunits of the cytochrome b6-f complex are cytochrome b6, subunit IV (17 kDa polypeptide, petD), cytochrome f and the Rieske protein, while the 4 small subunits are petG, petL, petM and petN. The complex functions as a dimer.

Its subcellular location is the plastid. It is found in the chloroplast thylakoid membrane. Functionally, component of the cytochrome b6-f complex, which mediates electron transfer between photosystem II (PSII) and photosystem I (PSI), cyclic electron flow around PSI, and state transitions. The protein is Cytochrome b6-f complex subunit 4 of Oryza sativa (Rice).